A 566-amino-acid chain; its full sequence is MARRLATASLAVLAAAATALTAPTPAAAAPPGAKDVTAVLFEWKFASVARACTDSLGPAGYGYVQVSPPQEHIQGSQWWTSYQPVSYKIAGRLGDRAAFKSMVDTCHAAGVKVVADSVINHMAAGSGTGTGGSAYQKYDYPGIWSGADMDDCRSEINDYGNRANVQNCELVGLADLDTGEPYVRDRIAAYLNDLLLLGVDGFRIDAAKHMPAADLTAIKAKVGNGSTYWKQEAIHGAGEAVQPSEYLGTGDVQEFRYARDLKRVFQNENLAHLKNFGEDWGYMASGKSAVFVDNHDTERGGDTLNYKNGSAYTLAGVFMLAWPYGSPDVHSGYEFTDHDAGPPNGGTVNACYSDGWKCQHAWPELSSMVGLRNTASGQPVTNWWDNGGDQIAFGRGDKAYVAINHEGSALNRTFQSGLPGGAYCDVQSGRSVTVGSDGTFTATVAAGTALALHTGARTCSGGGTGPGTGQTSASFHVNATTAWGENIYVTGDQAALGNWDPARALKLDPAAYPVWKLDVPLAAGTPFQYKYLRKDAAGKAVWESGANRTATVGTTGALTLNDTWRG.

The N-terminal stretch at 1–28 is a signal peptide; that stretch reads MARRLATASLAVLAAAATALTAPTPAAA. Residues N120, Q166, and D175 each contribute to the Ca(2+) site. D205 acts as the Nucleophile in catalysis. A Ca(2+)-binding site is contributed by H209. E232 serves as the catalytic Proton donor. The CBM20 domain occupies 465–566; the sequence is GPGTGQTSAS…ALTLNDTWRG (102 aa).

It belongs to the glycosyl hydrolase 13 family. In terms of assembly, monomer. The cofactor is Ca(2+).

It catalyses the reaction Endohydrolysis of (1-&gt;4)-alpha-D-glucosidic linkages in polysaccharides containing three or more (1-&gt;4)-alpha-linked D-glucose units.. The polypeptide is Alpha-amylase (amy) (Streptomyces griseus).